Consider the following 114-residue polypeptide: Flagellar hook-basal body complex protein FliE (114 aa).

Belongs to the FliE family.

Its subcellular location is the bacterial flagellum basal body. This chain is Flagellar hook-basal body complex protein FliE, found in Burkholderia lata (strain ATCC 17760 / DSM 23089 / LMG 22485 / NCIMB 9086 / R18194 / 383).